The chain runs to 858 residues: Large structural phosphoprotein (858 aa).

The disordered stretch occupies residues 603–629 (DVSRGGKGNSRDLYSGGNAEKKETSGK).

This sequence belongs to the herpesviridae large structural phosphoprotein family. As to quaternary structure, homotetramer. Interacts with the major capsid protein. 180 tegument protein pU11 tetramers bind to the virion capsid. In terms of processing, phosphorylated at multiple sites.

The protein localises to the virion tegument. In Homo sapiens (Human), this protein is Large structural phosphoprotein (U11).